The following is a 253-amino-acid chain: 2-C-methyl-D-erythritol 4-phosphate cytidylyltransferase (253 aa).

The disordered stretch occupies residues 1-28 (MSVSSRPGRRRFALIPSAGTGTRAGGDL).

It belongs to the IspD/TarI cytidylyltransferase family. IspD subfamily.

It catalyses the reaction 2-C-methyl-D-erythritol 4-phosphate + CTP + H(+) = 4-CDP-2-C-methyl-D-erythritol + diphosphate. The protein operates within isoprenoid biosynthesis; isopentenyl diphosphate biosynthesis via DXP pathway; isopentenyl diphosphate from 1-deoxy-D-xylulose 5-phosphate: step 2/6. Catalyzes the formation of 4-diphosphocytidyl-2-C-methyl-D-erythritol from CTP and 2-C-methyl-D-erythritol 4-phosphate (MEP). In Ralstonia nicotianae (strain ATCC BAA-1114 / GMI1000) (Ralstonia solanacearum), this protein is 2-C-methyl-D-erythritol 4-phosphate cytidylyltransferase.